Consider the following 295-residue polypeptide: Iron-sulfur cluster carrier protein (295 aa).

An ATP-binding site is contributed by 38-45 (GKGGVGKS).

The protein belongs to the Mrp/NBP35 ATP-binding proteins family. In terms of assembly, homodimer.

Functionally, binds and transfers iron-sulfur (Fe-S) clusters to target apoproteins. Can hydrolyze ATP. In Pyrococcus abyssi (strain GE5 / Orsay), this protein is Iron-sulfur cluster carrier protein.